A 1930-amino-acid polypeptide reads, in one-letter code: Ankyrin repeat domain-containing protein SAT10 (1930 aa).

20 ANK repeats span residues 840 to 872, 878 to 908, 920 to 949, 959 to 989, 993 to 1023, 1073 to 1102, 1106 to 1135, 1144 to 1174, 1178 to 1205, 1206 to 1235, 1239 to 1268, 1272 to 1301, 1304 to 1333, 1339 to 1368, 1400 to 1429, 1514 to 1543, 1548 to 1577, 1615 to 1644, 1651 to 1680, and 1696 to 1724; these read FRHT…DLEE, GTWN…GVLN, SGNT…MRGY, QRSS…DYSK, NGAS…FSNE, SGLT…DANG, EFEA…TKTE, GRTR…QLSH, NQRT…ETET, GLQE…EINA, YGNT…RLDL, DNVN…DVNA, GGDT…KFIL, RFEN…ERDL, SGWT…GRAA, QNML…SLTP, RHGT…MLAD, MGRN…NEDL, DGWT…KIFD, and KTWT…TTSD.

It functions in the pathway mycotoxin biosynthesis. In terms of biological role, ankyrin repeat domain-containing protein; part of the satratoxin SC1 cluster involved in the biosynthesis of satratoxins, trichothecene mycotoxins that are associated with human food poisonings. Satratoxins are suggested to be made by products of multiple gene clusters (SC1, SC2 and SC3) that encode 21 proteins in all, including polyketide synthases, acetyltransferases, and other enzymes expected to modify the trichothecene skeleton. SC1 encodes 10 proteins, SAT1 to SAT10. The largest are SAT8, which encodes a putative polyketide synthase (PKS) with a conventional non-reducing architecture, and SAT10, a putative protein containing four ankyrin repeats and thus may be involved in protein scaffolding. The putative short-chain reductase SAT3 may assist the PKS in some capacity. SAT6 contains a secretory lipase domain and acts probably as a trichothecene esterase. SAT5 encodes a putative acetyltransferase, and so, with SAT6, may affect endogenous protection from toxicity. The probable transcription factor SAT9 may regulate the expression of the SC1 cluster. SC2 encodes proteins SAT11 to SAT16, the largest of which encodes the putative reducing PKS SAT13. SAT11 is a cytochrome P450 monooxygenase, while SAT14 and SAT16 are probable acetyltransferases. The SC2 cluster may be regulated by the transcription factor SAT15. SC3 is a small cluster that encodes 5 proteins, SAT17 to SAT21. SAT21 is a putative MFS-type transporter which may have a role in exporting secondary metabolites. The four other proteins putatively encoded in SC3 include the taurine hydroxylase-like protein SAT17, the O-methyltransferase SAT18, the acetyltransferase SAT19, and the Cys6-type zinc finger SAT20, the latter being probably involved in regulation of SC3 expression. In Stachybotrys chartarum (strain CBS 109288 / IBT 7711) (Toxic black mold), this protein is Ankyrin repeat domain-containing protein SAT10.